The sequence spans 463 residues: Ataxin-10 homolog (463 aa).

Belongs to the ataxin-10 family.

Its subcellular location is the cytoplasm. May play a role in the regulation of cytokinesis. The chain is Ataxin-10 homolog (CTR86) from Candida albicans (strain SC5314 / ATCC MYA-2876) (Yeast).